A 147-amino-acid chain; its full sequence is Large ribosomal subunit protein uL15 (147 aa).

Residues 1–14 (MKLHELRPAEGAVR) are compositionally biased toward basic and acidic residues. The segment at 1–54 (MKLHELRPAEGAVRDRKRKGRGTASGLGKTAGRGSNGQKARSGGGVRPGFEGGQ) is disordered. 2 stretches are compositionally biased toward gly residues: residues 23–35 (TASG…GRGS) and 42–52 (SGGGVRPGFEG).

The protein belongs to the universal ribosomal protein uL15 family. As to quaternary structure, part of the 50S ribosomal subunit.

Its function is as follows. Binds to the 23S rRNA. This Alkaliphilus oremlandii (strain OhILAs) (Clostridium oremlandii (strain OhILAs)) protein is Large ribosomal subunit protein uL15.